A 213-amino-acid polypeptide reads, in one-letter code: Ergothioneine transport ATP-binding protein EgtV (213 aa).

Positions 5–212 (VTIENVSFNY…ATKTLEIKAL (208 aa)) constitute an ABC transporter domain. Position 37–44 (37–44 (GESGSGKS)) interacts with ATP.

It belongs to the ABC transporter superfamily. In terms of assembly, the complex is composed of two ATP-binding proteins (EgtV) and two transmembrane proteins (EgtU).

The protein localises to the cell inner membrane. The catalysed reaction is ergothioneine(out) + ATP + H2O = ergothioneine(in) + ADP + phosphate + H(+). Part of the ABC transporter complex EgtUV involved in the uptake of ergothioneine (EGT), a natural low-molecular weight (LMW) thiol antioxidant which protects H.pylori against bleach stress. Responsible for energy coupling to the transport system. This is Ergothioneine transport ATP-binding protein EgtV from Helicobacter pylori (strain G27).